We begin with the raw amino-acid sequence, 564 residues long: Septation ring formation regulator EzrA (564 aa).

At 1–4 (MVLY) the chain is on the extracellular side. A helical membrane pass occupies residues 5–23 (IILAIIVIILIAVGVLFYL). Topologically, residues 24–564 (RSNKRQIIEK…KHIEEEVIKQ (541 aa)) are cytoplasmic. 5 coiled-coil regions span residues 99-138 (SFNASQSEIDDANELMDSYEQSYQQQLEDVNEIIALYKDN), 190-223 (DGNYVQAHNHIAALNEQMKQLRSYMEEIPELIRE), 271-300 (LISRLELEEANDKLANINDKLDDMYDLIEH), 350-435 (VRQF…RRLL), and 471-550 (VKQL…ESVE).

This sequence belongs to the EzrA family.

It is found in the cell membrane. Functionally, negative regulator of FtsZ ring formation; modulates the frequency and position of FtsZ ring formation. Inhibits FtsZ ring formation at polar sites. Interacts either with FtsZ or with one of its binding partners to promote depolymerization. In Staphylococcus aureus (strain Mu3 / ATCC 700698), this protein is Septation ring formation regulator EzrA.